Here is a 1089-residue protein sequence, read N- to C-terminus: WD repeat-containing protein on Y chromosome (1089 aa).

WD repeat units lie at residues Glu155–Ala199, Pro207–Phe249, Arg329–Ala368, Gly372–Thr411, Thr462–Ile501, Thr514–Asn553, and Phe601–Ser641. Residues Lys661–His684 form a disordered region. The span at His672 to His684 shows a compositional bias: low complexity. 2 WD repeats span residues Lys767–Ala806 and Gly850–Leu889. Residues Leu1049–Asn1089 are disordered.

The chain is WD repeat-containing protein on Y chromosome from Drosophila willistoni (Fruit fly).